The primary structure comprises 148 residues: Probable DNA-directed RNA polymerases I, II, and III subunit RPABC3 (148 aa).

The interval 16–40 is non-specific ssDNA binding; it reads DPDGKKFDRVSRYFCDAESFKMELI.

The protein belongs to the eukaryotic RPB8 RNA polymerase subunit family. In terms of assembly, component of the RNA polymerase I (Pol I), RNA polymerase II (Pol II) and RNA polymerase III (Pol III) complexes consisting of at least 13, 12 and 17 subunits, respectively. Directly interacts with POLR2A.

The protein resides in the nucleus. DNA-dependent RNA polymerase catalyzes the transcription of DNA into RNA using the four ribonucleoside triphosphates as substrates. Common component of RNA polymerases I, II and III which synthesize ribosomal RNA precursors, mRNA precursors and many functional non-coding RNAs, and small RNAs, such as 5S rRNA and tRNAs, respectively. This Caenorhabditis elegans protein is Probable DNA-directed RNA polymerases I, II, and III subunit RPABC3 (rpb-8).